Consider the following 179-residue polypeptide: Probable WRKY transcription factor 24 (179 aa).

A DNA-binding region (WRKY) is located at residues 92-157; the sequence is SDDDVLDDGY…YEGVHNHPCE (66 aa).

Belongs to the WRKY group II-c family.

The protein resides in the nucleus. Its function is as follows. Transcription factor. Interacts specifically with the W box (5'-(T)TGAC[CT]-3'), a frequently occurring elicitor-responsive cis-acting element. The polypeptide is Probable WRKY transcription factor 24 (WRKY24) (Arabidopsis thaliana (Mouse-ear cress)).